The sequence spans 1434 residues: Probable ATP-dependent DNA helicase HFM1 (1434 aa).

The Helicase ATP-binding domain occupies 289–476; that stretch reads DDLLYTDRNF…WLSDGERPAV (188 aa). 302–309 contacts ATP; that stretch reads APTGSGKT. The short motif at 410–413 is the DEAH box element; that stretch reads DEVH. The Helicase C-terminal domain occupies 514 to 718; the sequence is KVYSVIRTYS…DVNIALDWIR (205 aa). The SEC63 domain maps to 775 to 1089; it reads PTEAGRLMAW…VGLDIHQKFT (315 aa). Residues 1110–1130 are disordered; sequence TDISHSDYSGRATATGSSKGM. The segment at 1141–1156 adopts a C4-type zinc-finger fold; that stretch reads CHHHCKNKHACGHDCC. Residues 1294 to 1333 are disordered; that stretch reads GFGDTRDSSLGGSKLPFQKSSSRFQRDNSNSFASSPGKPD. A compositionally biased stretch (polar residues) spans 1311 to 1327; sequence QKSSSRFQRDNSNSFAS.

The protein belongs to the helicase family. SKI2 subfamily. It depends on Zn(2+) as a cofactor.

It carries out the reaction Couples ATP hydrolysis with the unwinding of duplex DNA by translocating in the 3'-5' direction.. The catalysed reaction is ATP + H2O = ADP + phosphate + H(+). Its function is as follows. Required for crossover formation and complete synapsis of homologous chromosomes during meiosis. The sequence is that of Probable ATP-dependent DNA helicase HFM1 from Mus musculus (Mouse).